Here is a 1514-residue protein sequence, read N- to C-terminus: ABC transporter C family member 5 (1514 aa).

Helical transmembrane passes span 16–36 (LLEL…LFAV), 76–96 (FGFN…VLVL), 111–131 (FVLC…FLVL), 142–162 (PFLV…TMYV), 177–197 (SHVV…FLAW), 312–332 (VFAG…SYFV), 334–354 (YLGG…IFFT), 421–441 (WYLH…AILY), 446–466 (IAAV…IPLA), and 533–553 (FIFW…SIFL). An ABC transmembrane type-1 1 domain is found at 307–588 (AACNAVFAGL…FPDLVSMMAQ (282 aa)). Positions 622 to 845 (IEIKDGVFCW…GTDFKALVSA (224 aa)) constitute an ABC transporter 1 domain. 657–664 (GTVGSGKS) provides a ligand contact to ATP. The stretch at 899–927 (ASDLKAIKEKKKKAKRSRKKQLVQEEERV) forms a coiled coil. 6 helical membrane-spanning segments follow: residues 946 to 966 (GALI…QIAS), 986 to 1006 (PTLL…FIFV), 1078 to 1098 (IVAV…PVAV), 1117 to 1137 (IVSI…AGAA), 1155 to 1175 (LLDC…WLCL), and 1180 to 1200 (LSTL…HGTI). Residues 949 to 1231 (IPLIILAQAA…WILSFCKLEN (283 aa)) form the ABC transmembrane type-1 2 domain. The ABC transporter 2 domain maps to 1268-1502 (IELVDVKVRY…KSSMFLKLVT (235 aa)). An ATP-binding site is contributed by 1302–1309 (GRTGSGKS).

It belongs to the ABC transporter superfamily. ABCC family. Conjugate transporter (TC 3.A.1.208) subfamily. Ubiquitous, mostly in vascular tissues and epidermis, including guard cells.

It localises to the membrane. It catalyses the reaction ATP + H2O + xenobioticSide 1 = ADP + phosphate + xenobioticSide 2.. (E(2)17G) transport activity in negatively regulated by organic anions such as oestradiol-3-sulfate, luteolin-7-O-diglucuronide-4'-O-glucuronide, glycocholate, vanadate and the sulfonylurea glibenclamide, and, to a lower extent, by bafilomycin A1, NH(4)Cl, GSH, GSSG and DNB-GS. Pump for glutathione S-conjugates. Involved in regulation of K(+) and Na(+) cell content. Mediates resistance to NaCl and Li(+), confers sensitivity to sulfonylurea drugs such as glibenclamide (inducer of stomatal opening), and required for stomatal opening regulation by auxin, abscisic acid (ABA) and external Ca(2+). Transports oestradiol-17-(beta-D-glucuronide) (E(2)17G). Involved in the root auxin content regulation that controls the transition from primary root elongation to lateral root formation. Plays a role in ABA-mediated germination inhibition. High-affinity inositol hexakisphosphate transporter that plays a role in guard cell signaling and phytic acid storage. Required for phytic acid accumulation in developing seeds. Phytic acid is the primary storage form of phosphorus in cereal grains and other plant seeds. This is ABC transporter C family member 5 (ABCC5) from Arabidopsis thaliana (Mouse-ear cress).